The following is a 51-amino-acid chain: Defensin-like protein 2A (51 aa).

Glutamine 1 bears the Pyrrolidone carboxylic acid mark. Disulfide bonds link cysteine 4–cysteine 51, cysteine 15–cysteine 36, cysteine 21–cysteine 45, and cysteine 25–cysteine 47. Serine 8 carries the post-translational modification Phosphoserine; by CPK.

In terms of assembly, forms oligomers in its native state.

Functionally, possesses antifungal activity sensitive to inorganic cations. In Sinapis alba (White mustard), this protein is Defensin-like protein 2A.